The primary structure comprises 292 residues: 4-hydroxy-tetrahydrodipicolinate synthase (292 aa).

Thr-45 contributes to the pyruvate binding site. The Proton donor/acceptor role is filled by Tyr-133. Lys-161 functions as the Schiff-base intermediate with substrate in the catalytic mechanism. Pyruvate is bound at residue Ile-203.

Belongs to the DapA family. In terms of assembly, homotetramer; dimer of dimers.

It localises to the cytoplasm. It carries out the reaction L-aspartate 4-semialdehyde + pyruvate = (2S,4S)-4-hydroxy-2,3,4,5-tetrahydrodipicolinate + H2O + H(+). Its pathway is amino-acid biosynthesis; L-lysine biosynthesis via DAP pathway; (S)-tetrahydrodipicolinate from L-aspartate: step 3/4. Its function is as follows. Catalyzes the condensation of (S)-aspartate-beta-semialdehyde [(S)-ASA] and pyruvate to 4-hydroxy-tetrahydrodipicolinate (HTPA). The sequence is that of 4-hydroxy-tetrahydrodipicolinate synthase from Salmonella typhi.